A 510-amino-acid polypeptide reads, in one-letter code: Beta-glucosidase 26 (510 aa).

Positions 1–27 (MRKFIAALRLALAAAAHLLLTLPPAQC) are cleaved as a signal peptide. Glutamine 59 is an a beta-D-glucoside binding site. Asparagine 87 and asparagine 127 each carry an N-linked (GlcNAc...) asparagine glycan. A beta-D-glucoside is bound by residues histidine 160 and 205 to 206 (NE). Glutamate 206 functions as the Proton donor in the catalytic mechanism. A disulfide bridge connects residues cysteine 225 and cysteine 228. A glycan (N-linked (GlcNAc...) asparagine) is linked at asparagine 233. The a beta-D-glucoside site is built by tyrosine 345 and glutamate 416. The Nucleophile role is filled by glutamate 416. N-linked (GlcNAc...) asparagine glycosylation occurs at asparagine 424. A beta-D-glucoside contacts are provided by residues tryptophan 463, 470–471 (EW), and phenylalanine 479.

The protein belongs to the glycosyl hydrolase 1 family.

It carries out the reaction Hydrolysis of terminal, non-reducing beta-D-glucosyl residues with release of beta-D-glucose.. Hydrolyzes p-nitrophenyl beta-D-glucoside, p-nitrophenyl beta-D-mannoside, p-nitrophenyl beta-D-galactoside, p-nitrophenyl beta-D-xyloside, p-nitrophenyl beta-D-fucoside, p-nitrophenyl beta-L-arabinoside, cello-oligosaccharides, laminari-oligosaccharides and sophorose. This chain is Beta-glucosidase 26 (BGLU26), found in Oryza sativa subsp. japonica (Rice).